A 482-amino-acid polypeptide reads, in one-letter code: Glutamate--tRNA ligase (482 aa).

The short motif at 9-19 is the 'HIGH' region element; it reads PSPTGYLHIGG. The short motif at 252 to 256 is the 'KMSKS' region element; that stretch reads KLSKR. Position 255 (Lys-255) interacts with ATP.

Belongs to the class-I aminoacyl-tRNA synthetase family. Glutamate--tRNA ligase type 1 subfamily. In terms of assembly, monomer.

The protein resides in the cytoplasm. It carries out the reaction tRNA(Glu) + L-glutamate + ATP = L-glutamyl-tRNA(Glu) + AMP + diphosphate. In terms of biological role, catalyzes the attachment of glutamate to tRNA(Glu) in a two-step reaction: glutamate is first activated by ATP to form Glu-AMP and then transferred to the acceptor end of tRNA(Glu). The sequence is that of Glutamate--tRNA ligase from Ureaplasma urealyticum serovar 10 (strain ATCC 33699 / Western).